A 142-amino-acid polypeptide reads, in one-letter code: UPF0332 protein PH1297 (142 aa).

It belongs to the UPF0332 family.

In Pyrococcus horikoshii (strain ATCC 700860 / DSM 12428 / JCM 9974 / NBRC 100139 / OT-3), this protein is UPF0332 protein PH1297.